A 297-amino-acid polypeptide reads, in one-letter code: tRNA pseudouridine synthase B (297 aa).

Aspartate 41 acts as the Nucleophile in catalysis.

The protein belongs to the pseudouridine synthase TruB family. Type 1 subfamily.

It carries out the reaction uridine(55) in tRNA = pseudouridine(55) in tRNA. Its function is as follows. Responsible for synthesis of pseudouridine from uracil-55 in the psi GC loop of transfer RNAs. This is tRNA pseudouridine synthase B from Synechococcus sp. (strain CC9311).